The chain runs to 408 residues: NADH-quinone oxidoreductase subunit D (408 aa).

The protein belongs to the complex I 49 kDa subunit family. As to quaternary structure, NDH-1 is composed of 14 different subunits. Subunits NuoB, C, D, E, F, and G constitute the peripheral sector of the complex.

The protein localises to the cell inner membrane. The catalysed reaction is a quinone + NADH + 5 H(+)(in) = a quinol + NAD(+) + 4 H(+)(out). NDH-1 shuttles electrons from NADH, via FMN and iron-sulfur (Fe-S) centers, to quinones in the respiratory chain. The immediate electron acceptor for the enzyme in this species is believed to be ubiquinone. Couples the redox reaction to proton translocation (for every two electrons transferred, four hydrogen ions are translocated across the cytoplasmic membrane), and thus conserves the redox energy in a proton gradient. In Wolinella succinogenes (strain ATCC 29543 / DSM 1740 / CCUG 13145 / JCM 31913 / LMG 7466 / NCTC 11488 / FDC 602W) (Vibrio succinogenes), this protein is NADH-quinone oxidoreductase subunit D.